A 149-amino-acid chain; its full sequence is MVFLTTRLWLRNRLTDRYWRVQEVLKHAQHFRGRKNRCYRLAVRAVTRAFVKCTKARRLKKRNLRTLWINRITAASQEHGLKYPAFIVNLIKCQVELNRKVLVDLAIYEPKTFKSLAALAKRRQQEGFAAALGDGKEPEGIFSRVVQYH.

The N-terminal 9 residues, 1 to 9 (MVFLTTRLW), are a transit peptide targeting the mitochondrion.

Belongs to the bacterial ribosomal protein bL20 family. In terms of assembly, component of the mitochondrial ribosome large subunit (39S) which comprises a 16S rRNA and about 50 distinct proteins. Interacts with OXA1L.

The protein localises to the mitochondrion. The chain is Large ribosomal subunit protein bL20m (Mrpl20) from Mus musculus (Mouse).